The primary structure comprises 505 residues: ATP synthase subunit alpha (505 aa).

Residue 169 to 176 (GDRQIGKT) coordinates ATP.

It belongs to the ATPase alpha/beta chains family. In terms of assembly, F-type ATPases have 2 components, CF(1) - the catalytic core - and CF(0) - the membrane proton channel. CF(1) has five subunits: alpha(3), beta(3), gamma(1), delta(1), epsilon(1). CF(0) has three main subunits: a(1), b(2) and c(9-12). The alpha and beta chains form an alternating ring which encloses part of the gamma chain. CF(1) is attached to CF(0) by a central stalk formed by the gamma and epsilon chains, while a peripheral stalk is formed by the delta and b chains.

The protein resides in the cell inner membrane. The enzyme catalyses ATP + H2O + 4 H(+)(in) = ADP + phosphate + 5 H(+)(out). Functionally, produces ATP from ADP in the presence of a proton gradient across the membrane. The alpha chain is a regulatory subunit. The protein is ATP synthase subunit alpha of Desulfosudis oleivorans (strain DSM 6200 / JCM 39069 / Hxd3) (Desulfococcus oleovorans).